Consider the following 296-residue polypeptide: Chelated iron transport system membrane protein YfeB (296 aa).

One can recognise an ABC transporter domain in the interval 11 to 246; it reads LVVDNVTVTY…NLEMTFGGVL (236 aa). 44-51 contributes to the ATP binding site; sequence GVNGSGKS. A disordered region spans residues 276–296; the sequence is VFYGHTKNDPPAQSQSKEQNS. The span at 286 to 296 shows a compositional bias: polar residues; that stretch reads PAQSQSKEQNS.

It belongs to the ABC transporter superfamily.

It localises to the cell inner membrane. In terms of biological role, part of an ATP-driven transport system YfeABCD for chelated iron. In Yersinia pestis, this protein is Chelated iron transport system membrane protein YfeB (yfeB).